We begin with the raw amino-acid sequence, 240 residues long: uncharacterized protein (240 aa).

The segment at 26-52 (DYVDDGESLPTRQSVKNQREQKKKQGK) is disordered. Residues 57-77 (LFTVLAVIFVFVPVIVLVTLF) form a helical membrane-spanning segment. Residues 100 to 185 (KYEVVPKSED…QPAEPVQNVP (86 aa)) are disordered. Over residues 103–159 (VVPKSEDKNDTADTKETALQKESKKEPEDSKPKEQTAADKKQTAVAEKEDSPNKEEA) the composition is skewed to basic and acidic residues. Residues 160-185 (TAAAASSSQSTVQQQEQPAEPVQNVP) show a composition bias toward low complexity. The LysM domain maps to 189–235 (VKHTVQKKETLYRISMKYYKSRTGEEKIRAYNHLNGNDVYTGQVLDI).

The protein localises to the membrane. This is an uncharacterized protein from Bacillus subtilis (strain 168).